Consider the following 231-residue polypeptide: L-ribulose-5-phosphate 4-epimerase (231 aa).

Substrate-binding positions include 27-28 (GN), 44-45 (SG), and 74-75 (SS). Residues Asp-76, His-95, and His-97 each coordinate Zn(2+). Asp-120 serves as the catalytic Proton donor/acceptor. Position 171 (His-171) interacts with Zn(2+). The Proton donor/acceptor role is filled by Tyr-229.

Belongs to the aldolase class II family. AraD/FucA subfamily. As to quaternary structure, homotetramer. Zn(2+) serves as cofactor.

It carries out the reaction L-ribulose 5-phosphate = D-xylulose 5-phosphate. Its pathway is carbohydrate degradation; L-arabinose degradation via L-ribulose; D-xylulose 5-phosphate from L-arabinose (bacterial route): step 3/3. Involved in the degradation of L-arabinose. Catalyzes the interconversion of L-ribulose 5-phosphate (LRu5P) and D-xylulose 5-phosphate (D-Xu5P) via a retroaldol/aldol mechanism (carbon-carbon bond cleavage analogous to a class II aldolase reaction). This is L-ribulose-5-phosphate 4-epimerase from Salmonella typhimurium (strain LT2 / SGSC1412 / ATCC 700720).